Consider the following 204-residue polypeptide: INSIG protein homolog (204 aa).

The next 5 membrane-spanning stretches (helical) occupy residues isoleucine 5–valine 27, phenylalanine 47–arginine 64, alanine 76–histidine 97, valine 101–valine 118, and glycine 124–leucine 145. Histidine 26 lines the a 1,2-diacyl-sn-glycerol pocket. Residue tyrosine 150 participates in a 1,2-diacyl-sn-glycerol binding. A helical transmembrane segment spans residues proline 162 to glycine 179.

This sequence belongs to the INSIG family. Homotrimer.

It localises to the membrane. Diacylglycerol-binding protein. The protein is INSIG protein homolog of Mycolicibacterium vanbaalenii (strain DSM 7251 / JCM 13017 / BCRC 16820 / KCTC 9966 / NRRL B-24157 / PYR-1) (Mycobacterium vanbaalenii).